Consider the following 943-residue polypeptide: Isoleucine--tRNA ligase (943 aa).

The 'HIGH' region motif lies at 58 to 68 (PYANGTIHIGH). Glutamate 567 lines the L-isoleucyl-5'-AMP pocket. Residues 608 to 612 (KMSKS) carry the 'KMSKS' region motif. Lysine 611 is a binding site for ATP. Cysteine 906, cysteine 909, cysteine 926, and cysteine 929 together coordinate Zn(2+).

Belongs to the class-I aminoacyl-tRNA synthetase family. IleS type 1 subfamily. In terms of assembly, monomer. Zn(2+) is required as a cofactor.

The protein resides in the cytoplasm. It carries out the reaction tRNA(Ile) + L-isoleucine + ATP = L-isoleucyl-tRNA(Ile) + AMP + diphosphate. In terms of biological role, catalyzes the attachment of isoleucine to tRNA(Ile). As IleRS can inadvertently accommodate and process structurally similar amino acids such as valine, to avoid such errors it has two additional distinct tRNA(Ile)-dependent editing activities. One activity is designated as 'pretransfer' editing and involves the hydrolysis of activated Val-AMP. The other activity is designated 'posttransfer' editing and involves deacylation of mischarged Val-tRNA(Ile). This chain is Isoleucine--tRNA ligase, found in Pseudomonas fluorescens (strain Pf0-1).